A 543-amino-acid polypeptide reads, in one-letter code: Chaperonin GroEL 2 (543 aa).

Residues T29 to P32, D86 to T90, G413, N479 to A481, and D495 contribute to the ATP site.

It belongs to the chaperonin (HSP60) family. As to quaternary structure, forms a cylinder of 14 subunits composed of two heptameric rings stacked back-to-back. Interacts with the co-chaperonin GroES.

It localises to the cytoplasm. The catalysed reaction is ATP + H2O + a folded polypeptide = ADP + phosphate + an unfolded polypeptide.. Functionally, together with its co-chaperonin GroES, plays an essential role in assisting protein folding. The GroEL-GroES system forms a nano-cage that allows encapsulation of the non-native substrate proteins and provides a physical environment optimized to promote and accelerate protein folding. In Synechococcus sp. (strain CC9311), this protein is Chaperonin GroEL 2.